The chain runs to 518 residues: Arrestin-related trafficking adapter 10 (518 aa).

A Glycyl lysine isopeptide (Lys-Gly) (interchain with G-Cter in ubiquitin) cross-link involves residue lysine 118.

The protein belongs to the ART10 family. Interacts with RSP5. Ubiquitinated by RSP5.

The protein localises to the cytoplasm. May regulate endocytosis by recruiting RSP5 ubiquitin ligase activity to specific plasma membrane proteins in response to extracellular stimuli. The polypeptide is Arrestin-related trafficking adapter 10 (ART10) (Saccharomyces cerevisiae (strain YJM789) (Baker's yeast)).